Here is a 203-residue protein sequence, read N- to C-terminus: 3-isopropylmalate dehydratase small subunit (203 aa).

The protein belongs to the LeuD family. LeuD type 1 subfamily. In terms of assembly, heterodimer of LeuC and LeuD.

It carries out the reaction (2R,3S)-3-isopropylmalate = (2S)-2-isopropylmalate. It participates in amino-acid biosynthesis; L-leucine biosynthesis; L-leucine from 3-methyl-2-oxobutanoate: step 2/4. In terms of biological role, catalyzes the isomerization between 2-isopropylmalate and 3-isopropylmalate, via the formation of 2-isopropylmaleate. This chain is 3-isopropylmalate dehydratase small subunit, found in Pelagibacter ubique (strain HTCC1062).